Reading from the N-terminus, the 811-residue chain is Potassium transporter 7 (811 aa).

Over 1 to 52 (MPSYQYLLSLLFYILDCTDRFSVIVTIHNHRVGVLMIVLLQDQWKSYCRTIS) the chain is Cytoplasmic. The chain crosses the membrane as a helical span at residues 53 to 73 (LLAFQSFGVVYGDLSTSPLYV). The Extracellular segment spans residues 74-93 (YKSAFSGRLNNYRDETTIFG). Residues 94-114 (LFSLIFWTLTLLPLLKYVIIV) form a helical membrane-spanning segment. Residues 115-181 (LNADDNGEGG…EKHRKLRTCL (67 aa)) are Cytoplasmic-facing. The chain crosses the membrane as a helical span at residues 182-202 (LLFVLFGACMVIGDGVFTPAI). Residues 203–217 (SVLSAISGLKDPGPG) are Extracellular-facing. Residues 218–238 (GIPDGWVVFIACIVLVGLFAL) form a helical membrane-spanning segment. Residues 239–245 (QHRGTHR) are Cytoplasmic-facing. Residues 246–266 (VAFMFAPIVVVWLLSIGVIGL) traverse the membrane as a helical segment. The Extracellular segment spans residues 267 to 296 (YNIIHWNHRIFLALSPHYVIKFFKMTGKDG). Residues 297-317 (WLSLGGVLLAITGTEAMFADL) traverse the membrane as a helical segment. The Cytoplasmic segment spans residues 318–326 (GHFTAASIR). The helical transmembrane segment at 327 to 347 (LAFVGAIYPCLVLQYMGQAAF) threads the bilayer. Over 348–366 (LSRNMSAVEDSFYQSVPRS) the chain is Extracellular. A glycan (N-linked (GlcNAc...) asparagine) is linked at N351. Residues 367–387 (LFWPVFVIATLAAVVGSQSII) form a helical membrane-spanning segment. Topologically, residues 388 to 418 (SATFSIVKQCLSLGCFPRVKVVHTSRWIHGQ) are cytoplasmic. Residues 419 to 439 (IYIPEINWILMVLCLAVTLGF) form a helical membrane-spanning segment. The Extracellular segment spans residues 440–450 (RDTTVIGNAYG). Residues 451 to 471 (LACIVVMFVTTWLMALVIIFV) traverse the membrane as a helical segment. At 472 to 475 (WQKN) the chain is on the cytoplasmic side. A helical membrane pass occupies residues 476 to 496 (ILLALLFVVAFGSIEVVYLSA). Residues 497–503 (AVTKVPQ) lie on the Extracellular side of the membrane. The chain crosses the membrane as a helical span at residues 504 to 524 (GGWAPIVFAFVFMLVMYVWHY). At 525–811 (GSRRKYLFDL…LVEVGMIYYV (287 aa)) the chain is on the cytoplasmic side. Residues 680-702 (TGLVMRDSNNEASGTSLTRSSRS) are disordered.

The protein belongs to the HAK/KUP transporter (TC 2.A.72.3) family. Expressed in roots and shoots.

Its subcellular location is the membrane. Functionally, high-affinity potassium transporter. The protein is Potassium transporter 7 (HAK7) of Oryza sativa subsp. japonica (Rice).